The sequence spans 564 residues: E3 ubiquitin-protein ligase TRIM16 (564 aa).

The segment at 1–70 (MAELDLMAPG…DPAEQGDPAG (70 aa)) is disordered. Positions 24–39 (SPDSGSPSPDSGSASP) are enriched in low complexity. 2 consecutive B box-type zinc fingers follow at residues 72-122 (GKEV…LTEP) and 126-165 (HNWRYCPAHHSPLSAFCCPDQQCICQDCCQEHSGHTIVSL). Ser-116 carries the post-translational modification Phosphoserine. 4 residues coordinate Zn(2+): Cys-131, His-134, Cys-153, and His-157. 3 coiled-coil regions span residues 165-203 (LDAARRDKEAELQCTQLDLERKLKLNENAISRLQANQKS), 243-274 (AALSQANGIKAHLEYRSAEMEKSKQELERMAA), and 320-340 (HLIQLLENYKKKLQEFSKEEE). Ser-203 is modified (phosphoserine). The region spanning 355-553 (YWTSKPEPST…RIVDLGEEPE (199 aa)) is the B30.2/SPRY domain.

It belongs to the TRIM/RBCC family. In terms of assembly, homodimerizes via its coiled-coil domain. Heterodimerizes with MID1, TRIM24 and PML. Interacts with Galectin-3/LGALS3 in a ULK1-dependent manner; this interaction mediates autophagy of damage endomembranes. Interacts with BECN1. Interacts with ATG16L1. Interacts with p62/SQSTM and LC3B/MAP1LC3B. Post-translationally, phosphorylated by ULK1. Auto-ubiquitinates via its B-Boxes.

The protein localises to the cytoplasm. The enzyme catalyses S-ubiquitinyl-[E2 ubiquitin-conjugating enzyme]-L-cysteine + [acceptor protein]-L-lysine = [E2 ubiquitin-conjugating enzyme]-L-cysteine + N(6)-ubiquitinyl-[acceptor protein]-L-lysine.. In terms of biological role, E3 ubiquitin ligase that plays an essential role in the organization of autophagic response and ubiquitination upon lysosomal and phagosomal damages. Plays a role in the stress-induced biogenesis and degradation of protein aggresomes by regulating the p62-KEAP1-NRF2 signaling and particularly by modulating the ubiquitination levels and thus stability of NRF2. Acts as a scaffold protein and facilitates autophagic degradation of protein aggregates by interacting with p62/SQSTM, ATG16L1 and LC3B/MAP1LC3B. In turn, protects the cell against oxidative stress-induced cell death as a consequence of endomembrane damage. The polypeptide is E3 ubiquitin-protein ligase TRIM16 (TRIM16) (Pongo abelii (Sumatran orangutan)).